Here is a 304-residue protein sequence, read N- to C-terminus: PTB domain-containing engulfment adapter protein 1 (304 aa).

Threonine 16 carries the post-translational modification Phosphothreonine. The region spanning 21–176 is the PID domain; it reads SKHYIPYNAK…AGMQKRIQDL (156 aa). A coiled-coil region spans residues 159 to 200; it reads DVETRKQIAGMQKRIQDLETENMELKNKVQDLESRLRTTQVS. The residue at position 223 (serine 223) is a Phosphoserine.

The protein belongs to the ced-6 family. As to quaternary structure, homodimer. Interacts with clathrin and MEGF10. Interacts with GDP-bound ARF6, but not with GTP-bound ARF6. Part of a complex composed of GULP1, ACAP1 and ARF6. Interacts with ACAP1, LRP1 and STAB2. Detected throughout the brain, particularly in Purkinje cells, hippocampal and cortical neurons (at protein level).

Its subcellular location is the cytoplasm. Functionally, modulates cellular glycosphingolipid and cholesterol transport. May play a role in the internalization of various LRP1 ligands, such as PSAP. May function as an adapter protein. Required for efficient phagocytosis of apoptotic cells. Increases cellular levels of GTP-bound ARF6. The chain is PTB domain-containing engulfment adapter protein 1 (Gulp1) from Mus musculus (Mouse).